A 239-amino-acid chain; its full sequence is Glucosamine-6-phosphate deaminase (239 aa).

The active-site Proton acceptor; for enolization step is Asp-62. The active-site For ring-opening step is Asn-128. His-130 (proton acceptor; for ring-opening step) is an active-site residue. Catalysis depends on Glu-135, which acts as the For ring-opening step.

Belongs to the glucosamine/galactosamine-6-phosphate isomerase family. NagB subfamily.

The catalysed reaction is alpha-D-glucosamine 6-phosphate + H2O = beta-D-fructose 6-phosphate + NH4(+). The protein operates within amino-sugar metabolism; N-acetylneuraminate degradation; D-fructose 6-phosphate from N-acetylneuraminate: step 5/5. In terms of biological role, catalyzes the reversible isomerization-deamination of glucosamine 6-phosphate (GlcN6P) to form fructose 6-phosphate (Fru6P) and ammonium ion. In Lactobacillus helveticus (strain DPC 4571), this protein is Glucosamine-6-phosphate deaminase.